Here is a 242-residue protein sequence, read N- to C-terminus: Probable 2-phosphosulfolactate phosphatase (242 aa).

Belongs to the ComB family. The cofactor is Mg(2+).

The catalysed reaction is (2R)-O-phospho-3-sulfolactate + H2O = (2R)-3-sulfolactate + phosphate. The protein is Probable 2-phosphosulfolactate phosphatase of Prochlorococcus marinus (strain NATL1A).